The following is a 165-amino-acid chain: Transcription factor E (165 aa).

The 83-residue stretch at 5 to 87 folds into the HTH TFE/IIEalpha-type domain; that stretch reads NDPVVRGYLL…LWQLDLSDIE (83 aa).

This sequence belongs to the TFE family. As to quaternary structure, monomer. Interaction with RNA polymerase subunits RpoF and RpoE is necessary for Tfe stimulatory transcription activity. Able to interact with Tbp and RNA polymerase in the absence of DNA promoter. Interacts both with the preinitiation and elongation complexes.

Functionally, transcription factor that plays a role in the activation of archaeal genes transcribed by RNA polymerase. Facilitates transcription initiation by enhancing TATA-box recognition by TATA-box-binding protein (Tbp), and transcription factor B (Tfb) and RNA polymerase recruitment. Not absolutely required for transcription in vitro, but particularly important in cases where Tbp or Tfb function is not optimal. It dynamically alters the nucleic acid-binding properties of RNA polymerases by stabilizing the initiation complex and destabilizing elongation complexes. Seems to translocate with the RNA polymerase following initiation and acts by binding to the non template strand of the transcription bubble in elongation complexes. The sequence is that of Transcription factor E from Methanococcoides burtonii (strain DSM 6242 / NBRC 107633 / OCM 468 / ACE-M).